The chain runs to 1262 residues: DNA-directed RNA polymerase subunit beta' (1262 aa).

Zn(2+) is bound by residues Cys-220, Cys-294, Cys-301, and Cys-304.

The protein belongs to the RNA polymerase beta' chain family. RpoC2 subfamily. In cyanobacteria the RNAP catalytic core is composed of 2 alpha, 1 beta, 1 beta', 1 gamma and 1 omega subunit. When a sigma factor is associated with the core the holoenzyme is formed, which can initiate transcription. Zn(2+) is required as a cofactor.

It catalyses the reaction RNA(n) + a ribonucleoside 5'-triphosphate = RNA(n+1) + diphosphate. Functionally, DNA-dependent RNA polymerase catalyzes the transcription of DNA into RNA using the four ribonucleoside triphosphates as substrates. This Gloeobacter violaceus (strain ATCC 29082 / PCC 7421) protein is DNA-directed RNA polymerase subunit beta'.